We begin with the raw amino-acid sequence, 189 residues long: Elongation factor P (189 aa).

Belongs to the elongation factor P family.

The protein localises to the cytoplasm. The protein operates within protein biosynthesis; polypeptide chain elongation. Functionally, involved in peptide bond synthesis. Stimulates efficient translation and peptide-bond synthesis on native or reconstituted 70S ribosomes in vitro. Probably functions indirectly by altering the affinity of the ribosome for aminoacyl-tRNA, thus increasing their reactivity as acceptors for peptidyl transferase. The sequence is that of Elongation factor P from Ehrlichia chaffeensis (strain ATCC CRL-10679 / Arkansas).